The chain runs to 196 residues: Small ribosomal subunit protein uS4m (196 aa).

In terms of domain architecture, S4 RNA-binding spans 88 to 154 (KRLDVILVRL…FKSNIRKNFQ (67 aa)).

This sequence belongs to the universal ribosomal protein uS4 family.

The protein resides in the mitochondrion. This Marchantia polymorpha (Common liverwort) protein is Small ribosomal subunit protein uS4m (RPS4).